The chain runs to 860 residues: Leucine--tRNA ligase (860 aa).

Positions 42 to 52 match the 'HIGH' region motif; that stretch reads PYPSGRLHMGH. Residues 619 to 623 carry the 'KMSKS' region motif; sequence KMSKS. ATP is bound at residue K622.

Belongs to the class-I aminoacyl-tRNA synthetase family.

It localises to the cytoplasm. The catalysed reaction is tRNA(Leu) + L-leucine + ATP = L-leucyl-tRNA(Leu) + AMP + diphosphate. The polypeptide is Leucine--tRNA ligase (Escherichia coli O7:K1 (strain IAI39 / ExPEC)).